The sequence spans 141 residues: Vesicle-associated membrane protein 4 (141 aa).

A disordered region spans residues methionine 1–aspartate 51. The Cytoplasmic segment spans residues methionine 1–alanine 118. 2 positions are modified to phosphoserine: serine 17 and serine 30. A v-SNARE coiled-coil homology domain is found at lysine 52–arginine 112. Residues isoleucine 119–phenylalanine 139 form a helical; Anchor for type IV membrane protein membrane-spanning segment. Residues arginine 140–threonine 141 lie on the Vesicular side of the membrane.

This sequence belongs to the synaptobrevin family. In terms of assembly, identified in a complex containing STX6, STX12, VAMP4 and VTI1A. Interacts with BAIAP3; this interaction is increased in the presence of calcium. (Microbial infection) Targeted and hydrolyzed by C.botulinum neurotoxin type X (BoNT/X) which hydrolyzes the 87-Arg-|-Ser-88 bond and probably inhibits neurotransmitter release. It remains unknown whether BoNT/X is ever produced, or what organisms it targets.

The protein resides in the golgi apparatus. Its subcellular location is the trans-Golgi network membrane. Involved in the pathway that functions to remove an inhibitor (probably synaptotagmin-4) of calcium-triggered exocytosis during the maturation of secretory granules. May be a marker for this sorting pathway that is critical for remodeling the secretory response of granule. The polypeptide is Vesicle-associated membrane protein 4 (Vamp4) (Mus musculus (Mouse)).